Reading from the N-terminus, the 694-residue chain is Soluble starch synthase 2-2, chloroplastic/amyloplastic (694 aa).

Residues 1–15 (MSGAIASSPAATLFL) constitute a chloroplast transit peptide. The interval 93–197 (KADHVEDSVS…DSENKESGPL (105 aa)) is disordered. Low complexity predominate over residues 127–142 (APVSKPKVDPSVPASK). The segment covering 156-176 (AALDKKEDVGVAEPLEAKADA) has biased composition (basic and acidic residues). Residues 177–186 (GGDAGAVSSA) show a composition bias toward low complexity. Residue K217 participates in ADP-alpha-D-glucose binding.

Belongs to the glycosyltransferase 1 family. Bacterial/plant glycogen synthase subfamily. In terms of tissue distribution, expressed in leaves and weakly in endosperm and roots.

It localises to the plastid. The protein localises to the amyloplast. Its subcellular location is the chloroplast. It carries out the reaction [(1-&gt;4)-alpha-D-glucosyl](n) + ADP-alpha-D-glucose = [(1-&gt;4)-alpha-D-glucosyl](n+1) + ADP + H(+). Its pathway is glycan biosynthesis; starch biosynthesis. Its function is as follows. May contribute to the deposition of transient starch in chloroplasts of leaves. The chain is Soluble starch synthase 2-2, chloroplastic/amyloplastic (SSII-2) from Oryza sativa subsp. japonica (Rice).